An 80-amino-acid chain; its full sequence is Cell division activator CedA (80 aa).

It belongs to the CedA family.

In terms of biological role, activates the cell division inhibited by chromosomal DNA over-replication. In Salmonella typhimurium (strain LT2 / SGSC1412 / ATCC 700720), this protein is Cell division activator CedA.